A 508-amino-acid chain; its full sequence is MGLPWYRVHTVVLNDPGRLLAVHIMHTALVSGWAGSMALYELAVFDPSDPVLDPMWRQGMFVIPFMTRLGITDSWGGWSISGGTVTNPGIWSYEGVAGTHIVFSGLCFLAAIWHWVYWDLEIFSDERTGKPSLDLPKIFGIHLFLAGVACFGFGAFHVTGLYGPGIWVSDPYGLTGKVQAVNPAWGAEGFDPFVPGGIASHHIAAGTLGILAGLFHLSVRPPQRLYKGLRMGNIETVLSSSIAAVFFAAFVVAGTMWYGSATTPIELFGPTRYQWDQGYFQQEIYRRVSNGLAENLSLSEAWSKIPEKLAFYDYIGNNPAKGGLFRAGSMDNGDGIAVGWLGHPVFRDKEGRELFVRRMPTFFETFPVVLVDEEGIVRADVPFRRAESKYSVEQVGVTVEFYGGELNGVSYSDPATVKKYARRSQLGEIFELDRATLKSDGVFRSSPRGWFTFGHATFALLFFFGHIWHGARTLFRDVFAGIDPDLDAQVEFGTFQKVGDPTTRKQAV.

6 helical membrane-spanning segments follow: residues Ala-21–Ser-36, Ile-101–Trp-115, Gly-140–Phe-156, Ile-203–Ser-218, Val-237–Val-252, and Thr-457–Arg-472.

The protein belongs to the PsbB/PsbC family. PsbB subfamily. PSII is composed of 1 copy each of membrane proteins PsbA, PsbB, PsbC, PsbD, PsbE, PsbF, PsbH, PsbI, PsbJ, PsbK, PsbL, PsbM, PsbT, PsbX, PsbY, PsbZ, Psb30/Ycf12, at least 3 peripheral proteins of the oxygen-evolving complex and a large number of cofactors. It forms dimeric complexes. Requires Binds multiple chlorophylls. PSII binds additional chlorophylls, carotenoids and specific lipids. as cofactor.

The protein resides in the plastid. The protein localises to the chloroplast thylakoid membrane. In terms of biological role, one of the components of the core complex of photosystem II (PSII). It binds chlorophyll and helps catalyze the primary light-induced photochemical processes of PSII. PSII is a light-driven water:plastoquinone oxidoreductase, using light energy to abstract electrons from H(2)O, generating O(2) and a proton gradient subsequently used for ATP formation. This is Photosystem II CP47 reaction center protein from Secale cereale (Rye).